The sequence spans 291 residues: Formamidopyrimidine-DNA glycosylase (291 aa).

Pro-2 serves as the catalytic Schiff-base intermediate with DNA. Glu-3 (proton donor) is an active-site residue. Lys-58 acts as the Proton donor; for beta-elimination activity in catalysis. The DNA site is built by His-104, Arg-123, and Lys-166. Residues 257-291 (KVYDREGEPCPTCGGTVQRFVQNGRSTFWCPKCQK) form an FPG-type zinc finger. The active-site Proton donor; for delta-elimination activity is the Arg-281.

It belongs to the FPG family. In terms of assembly, monomer. Zn(2+) serves as cofactor.

The enzyme catalyses Hydrolysis of DNA containing ring-opened 7-methylguanine residues, releasing 2,6-diamino-4-hydroxy-5-(N-methyl)formamidopyrimidine.. It carries out the reaction 2'-deoxyribonucleotide-(2'-deoxyribose 5'-phosphate)-2'-deoxyribonucleotide-DNA = a 3'-end 2'-deoxyribonucleotide-(2,3-dehydro-2,3-deoxyribose 5'-phosphate)-DNA + a 5'-end 5'-phospho-2'-deoxyribonucleoside-DNA + H(+). Its function is as follows. Involved in base excision repair of DNA damaged by oxidation or by mutagenic agents. Acts as a DNA glycosylase that recognizes and removes damaged bases. Has a preference for oxidized purines, such as 7,8-dihydro-8-oxoguanine (8-oxoG). Has AP (apurinic/apyrimidinic) lyase activity and introduces nicks in the DNA strand. Cleaves the DNA backbone by beta-delta elimination to generate a single-strand break at the site of the removed base with both 3'- and 5'-phosphates. The polypeptide is Formamidopyrimidine-DNA glycosylase (Rhodopseudomonas palustris (strain ATCC BAA-98 / CGA009)).